A 175-amino-acid chain; its full sequence is uncharacterized protein (175 aa).

A signal peptide spans 1–33; it reads MERLPYEIVSTIFRKAILHYVLIRGTTYPQSLA.

This is an uncharacterized protein from Methanocaldococcus jannaschii (strain ATCC 43067 / DSM 2661 / JAL-1 / JCM 10045 / NBRC 100440) (Methanococcus jannaschii).